The primary structure comprises 321 residues: Mas-related G-protein coupled receptor member B4 (321 aa).

At 1-33 (MGTTTLAWNINNTAENGSYTEMFSCITKFNTLN) the chain is on the extracellular side. Residues asparagine 11 and asparagine 16 are each glycosylated (N-linked (GlcNAc...) asparagine). The helical transmembrane segment at 34–54 (FLTVIIAVVGLAGNGIVLWLL) threads the bilayer. Topologically, residues 55–62 (AFHLHRNA) are cytoplasmic. A helical transmembrane segment spans residues 63–83 (FSVYVLNLAGADFLYLFTQVV). Residues 84-97 (HSLECVLQLDNNSF) are Extracellular-facing. Asparagine 94 carries N-linked (GlcNAc...) asparagine glycosylation. The helical transmembrane segment at 98–118 (YILLIVTMFAYLAGLCMIAAI) threads the bilayer. Residues 119–146 (SAERCLSVMWPIWYHCQRPRHTSAIMCA) lie on the Cytoplasmic side of the membrane. The helical transmembrane segment at 147-167 (LVWVSSLLLSLVVGLGCGFLF) threads the bilayer. Residues 168–172 (SYYDY) are Extracellular-facing. A helical transmembrane segment spans residues 173–193 (YFCITLNFITAAFLIVLSVVL). The Cytoplasmic portion of the chain corresponds to 194–215 (SVSSLALLVKIVWGSHRIPVTR). The chain crosses the membrane as a helical span at residues 216–236 (FFVTIALTVVVFIYFGMPFGI). Over 237–257 (CWFLLSRIMEFDSIFFNNVYE) the chain is Extracellular. The chain crosses the membrane as a helical span at residues 258–278 (IIEFLSCVNSCANPIIYFLVG). Residues 279-321 (SIRQHRLRWQSLKLLLQRAMQDTPEEESGERGPSQRSGELETV) are Cytoplasmic-facing. A disordered region spans residues 299–321 (QDTPEEESGERGPSQRSGELETV).

It belongs to the G-protein coupled receptor 1 family. Mas subfamily.

Its subcellular location is the membrane. Orphan receptor. Probably involved in the function of nociceptive neurons. May regulate nociceptor function and/or development, including the sensation or modulation of pain. The polypeptide is Mas-related G-protein coupled receptor member B4 (Mrgprb4) (Mus musculus (Mouse)).